The sequence spans 67 residues: Sec-independent protein translocase protein TatA (67 aa).

The helical transmembrane segment at 1–21 threads the bilayer; that stretch reads MFGLGGQELVLILLIVLLLFG.

The protein belongs to the TatA/E family. As to quaternary structure, forms a complex with TatC.

The protein localises to the cell inner membrane. In terms of biological role, part of the twin-arginine translocation (Tat) system that transports large folded proteins containing a characteristic twin-arginine motif in their signal peptide across membranes. TatA could form the protein-conducting channel of the Tat system. The protein is Sec-independent protein translocase protein TatA of Chlorobaculum tepidum (strain ATCC 49652 / DSM 12025 / NBRC 103806 / TLS) (Chlorobium tepidum).